A 723-amino-acid polypeptide reads, in one-letter code: Polyribonucleotide nucleotidyltransferase (723 aa).

Mg(2+) is bound by residues D497 and D503. A KH domain is found at 564-623 (PRLLSFRIDPELIGTVIGPGGRTIKGITERTNTKIDIEDGGIVTIASHDGAAAEAAQRII). The S1 motif domain occupies 633–701 (GEVFTGTITR…NRGRINLTLR (69 aa)). Residues 701–723 (RGVPQNGEETQSEPAPTPVAPLN) form a disordered region.

This sequence belongs to the polyribonucleotide nucleotidyltransferase family. The cofactor is Mg(2+).

It is found in the cytoplasm. It catalyses the reaction RNA(n+1) + phosphate = RNA(n) + a ribonucleoside 5'-diphosphate. Its function is as follows. Involved in mRNA degradation. Catalyzes the phosphorolysis of single-stranded polyribonucleotides processively in the 3'- to 5'-direction. In Prochlorococcus marinus (strain MIT 9313), this protein is Polyribonucleotide nucleotidyltransferase.